The following is a 374-amino-acid chain: Arrestin domain-containing protein 15 (374 aa).

The segment at 344 to 374 (HHLNRSKAKVSKTEQQQRKTRNIVEENPYFR) is disordered.

The protein belongs to the arrestin family.

The protein is Arrestin domain-containing protein 15 (arrd-15) of Caenorhabditis elegans.